A 219-amino-acid chain; its full sequence is Ribose-5-phosphate isomerase A (219 aa).

Substrate-binding positions include 28 to 31 (TGST), 81 to 84 (DGAD), and 94 to 97 (KGGG). Catalysis depends on Glu103, which acts as the Proton acceptor. Lys121 contacts substrate.

This sequence belongs to the ribose 5-phosphate isomerase family. Homodimer.

The catalysed reaction is aldehydo-D-ribose 5-phosphate = D-ribulose 5-phosphate. Its pathway is carbohydrate degradation; pentose phosphate pathway; D-ribose 5-phosphate from D-ribulose 5-phosphate (non-oxidative stage): step 1/1. Its function is as follows. Catalyzes the reversible conversion of ribose-5-phosphate to ribulose 5-phosphate. The polypeptide is Ribose-5-phosphate isomerase A (Shewanella sp. (strain ANA-3)).